A 229-amino-acid chain; its full sequence is MINNSLKITDLPNNERPRERLLRYGSEVLSNSELLAIILRTGTLHENIINLSSRILKESGGLNGVLNLSFEELKKVKGIGNAKAVQILALGELFKRFKAYKSFESVKITSPKEAANLVMEQLRSFNKEHLYVIMLNTKNIVIKISDVSVGSLNSSIVHPREVYVEPILKHAASIILCHNHPSGDPKPSNEDLNITKRLYECSKFIGIELLDHIIIGDGIYISLKEEGLL.

The 123-residue stretch at 107–229 folds into the MPN domain; it reads KITSPKEAAN…YISLKEEGLL (123 aa). The Zn(2+) site is built by His-178, His-180, and Asp-191. The short motif at 178 to 191 is the JAMM motif element; sequence HNHPSGDPKPSNED.

This sequence belongs to the UPF0758 family.

This chain is UPF0758 protein CA_C1241, found in Clostridium acetobutylicum (strain ATCC 824 / DSM 792 / JCM 1419 / IAM 19013 / LMG 5710 / NBRC 13948 / NRRL B-527 / VKM B-1787 / 2291 / W).